Reading from the N-terminus, the 108-residue chain is MTDQLLVTTTENIPNQKYEIIGEVFGVTTQSKNALRDLGAGLKSIVGGEIKAYTSMLTESRDQAINRLCENAANLGADAVVMMRFDSGSIAGDMQSVVAYGTAVKFID.

This sequence belongs to the UPF0145 family.

The polypeptide is UPF0145 protein LGAS_1099 (Lactobacillus gasseri (strain ATCC 33323 / DSM 20243 / BCRC 14619 / CIP 102991 / JCM 1131 / KCTC 3163 / NCIMB 11718 / NCTC 13722 / AM63)).